The primary structure comprises 448 residues: C4-dicarboxylate transport protein (448 aa).

The next 9 membrane-spanning stretches (helical) occupy residues 9 to 29 (SLYFQVIVAIIAGILVGHFYP), 59 to 79 (LIKMIIAPVIFCTVVSGIAGM), 91 to 111 (VALLYFEVVSTIALLIGLLVI), 159 to 179 (AFANGEILQVLLFAIMFGFAL), 203 to 223 (IVNMIMKLAPIGAFGAMAFTI), 237 to 257 (LIICFYVTCLLFIFIVLGTIS), 312 to 332 (GYSFNLDGTSIYLTMAAIFIA), 345 to 365 (ITLLLVLLISSKGAAGVTGSG), and 367 to 387 (IVMAATLSAVGHIPVAGLALI).

It belongs to the dicarboxylate/amino acid:cation symporter (DAACS) (TC 2.A.23) family.

The protein resides in the cell inner membrane. Functionally, responsible for the transport of dicarboxylates such as succinate, fumarate, and malate from the periplasm across the membrane. This is C4-dicarboxylate transport protein from Acinetobacter baylyi (strain ATCC 33305 / BD413 / ADP1).